A 215-amino-acid polypeptide reads, in one-letter code: Large ribosomal subunit protein uL3 (215 aa).

The interval 134–166 is disordered; that stretch reads MAHGSKNHRAPGSIGAGTTPGRVFPGKRMPGRM.

This sequence belongs to the universal ribosomal protein uL3 family. As to quaternary structure, part of the 50S ribosomal subunit. Forms a cluster with proteins L14 and L19.

One of the primary rRNA binding proteins, it binds directly near the 3'-end of the 23S rRNA, where it nucleates assembly of the 50S subunit. The chain is Large ribosomal subunit protein uL3 from Gloeobacter violaceus (strain ATCC 29082 / PCC 7421).